A 510-amino-acid chain; its full sequence is NAD(P)H-quinone oxidoreductase subunit 2 B, chloroplastic (510 aa).

The next 13 membrane-spanning stretches (helical) occupy residues 24 to 44, 57 to 77, 99 to 119, 124 to 144, 150 to 170, 183 to 203, 229 to 249, 295 to 315, 323 to 343, 347 to 367, 395 to 415, 418 to 438, and 484 to 504; these read LLLF…GLIL, IPWL…ALLF, IFQF…VEYI, MAIT…MFLC, ITIF…SGYT, YLLM…WLYG, ISIA…PAPF, WHLL…LVAI, MLAY…IVGD, GYAS…GTFA, ALSS…AGFF, LHLF…IGLL, and MIVC…IIAI.

Belongs to the complex I subunit 2 family. As to quaternary structure, NDH is composed of at least 16 different subunits, 5 of which are encoded in the nucleus.

The protein resides in the plastid. The protein localises to the chloroplast thylakoid membrane. The catalysed reaction is a plastoquinone + NADH + (n+1) H(+)(in) = a plastoquinol + NAD(+) + n H(+)(out). It catalyses the reaction a plastoquinone + NADPH + (n+1) H(+)(in) = a plastoquinol + NADP(+) + n H(+)(out). Its function is as follows. NDH shuttles electrons from NAD(P)H:plastoquinone, via FMN and iron-sulfur (Fe-S) centers, to quinones in the photosynthetic chain and possibly in a chloroplast respiratory chain. The immediate electron acceptor for the enzyme in this species is believed to be plastoquinone. Couples the redox reaction to proton translocation, and thus conserves the redox energy in a proton gradient. This chain is NAD(P)H-quinone oxidoreductase subunit 2 B, chloroplastic, found in Ceratophyllum demersum (Rigid hornwort).